We begin with the raw amino-acid sequence, 862 residues long: Linoleate 9S-lipoxygenase 1 (862 aa).

The PLAT domain maps to 34–161 (NDFGATIIDG…NYRYSRVFFA (128 aa)). Positions 164–862 (TYLPSQMPAA…AKGIPNSISI (699 aa)) constitute a Lipoxygenase domain. Residues 212 to 241 (GRPILGGNSDHPYPRRGRTERKPNASDPSL) are disordered. The Fe cation site is built by His-517, His-522, His-708, Asn-712, and Ile-862.

This sequence belongs to the lipoxygenase family. Monomer. Requires Fe cation as cofactor.

The catalysed reaction is (9Z,12Z)-octadecadienoate + O2 = (9S)-hydroperoxy-(10E,12Z)-octadecadienoate. The protein operates within lipid metabolism; oxylipin biosynthesis. Plant lipoxygenase may be involved in a number of diverse aspects of plant physiology including growth and development, pest resistance, and senescence or responses to wounding. It catalyzes the hydroperoxidation of lipids containing a cis,cis-1,4-pentadiene structure. The sequence is that of Linoleate 9S-lipoxygenase 1 (LOX1.1) from Hordeum vulgare (Barley).